A 106-amino-acid polypeptide reads, in one-letter code: MPRVVFIDEQSGEYAVDAQDGQSLMEVATQNGVPGIVAECGGSCVCATCRIEIEDAWVEIVGEANPDENDLLQSTGEPMTAGTRLSCQVFIDPSMDGLIVRVPLPA.

Positions 2–106 (PRVVFIDEQS…GLIVRVPLPA (105 aa)) constitute a 2Fe-2S ferredoxin-type domain. [2Fe-2S] cluster is bound by residues Cys-40, Cys-46, Cys-49, and Cys-87.

It belongs to the adrenodoxin/putidaredoxin family. [2Fe-2S] cluster is required as a cofactor.

Functionally, the oxidation of alpha-terpineol by cytochrome p450-TERP requires the participation of a flavoprotein, terpredoxin reductase, and an iron-sulfur protein, terpredoxin, to mediate the transfer of electrons from NADH to P450 for oxygen activation. This is Terpredoxin (terPB) from Pseudomonas sp.